We begin with the raw amino-acid sequence, 514 residues long: tRNA-2-methylthio-N(6)-dimethylallyladenosine synthase (514 aa).

The MTTase N-terminal domain maps to 68-186 (RTFLIKTYGC…LPEILEEAYL (119 aa)). [4Fe-4S] cluster is bound by residues Cys-77, Cys-113, Cys-147, Cys-223, Cys-227, and Cys-230. Positions 209-439 (RDGHIKAWVN…NKKVGIYSQQ (231 aa)) constitute a Radical SAM core domain. Residues 442-505 (SQYEGKIVTV…QYSLNGTFIQ (64 aa)) form the TRAM domain.

It belongs to the methylthiotransferase family. MiaB subfamily. Monomer. [4Fe-4S] cluster is required as a cofactor.

The protein localises to the cytoplasm. The catalysed reaction is N(6)-dimethylallyladenosine(37) in tRNA + (sulfur carrier)-SH + AH2 + 2 S-adenosyl-L-methionine = 2-methylsulfanyl-N(6)-dimethylallyladenosine(37) in tRNA + (sulfur carrier)-H + 5'-deoxyadenosine + L-methionine + A + S-adenosyl-L-homocysteine + 2 H(+). In terms of biological role, catalyzes the methylthiolation of N6-(dimethylallyl)adenosine (i(6)A), leading to the formation of 2-methylthio-N6-(dimethylallyl)adenosine (ms(2)i(6)A) at position 37 in tRNAs that read codons beginning with uridine. In Staphylococcus epidermidis (strain ATCC 35984 / DSM 28319 / BCRC 17069 / CCUG 31568 / BM 3577 / RP62A), this protein is tRNA-2-methylthio-N(6)-dimethylallyladenosine synthase.